The primary structure comprises 378 residues: Glutamate 5-kinase (378 aa).

Lys-14 is an ATP binding site. Substrate contacts are provided by Ser-54, Asp-141, and Asn-153. 173-174 (SD) contacts ATP. A PUA domain is found at 279 to 356 (AGRLTVDAGA…DEISAILGYD (78 aa)).

This sequence belongs to the glutamate 5-kinase family.

The protein resides in the cytoplasm. It catalyses the reaction L-glutamate + ATP = L-glutamyl 5-phosphate + ADP. It participates in amino-acid biosynthesis; L-proline biosynthesis; L-glutamate 5-semialdehyde from L-glutamate: step 1/2. Functionally, catalyzes the transfer of a phosphate group to glutamate to form L-glutamate 5-phosphate. This chain is Glutamate 5-kinase, found in Brucella canis (strain ATCC 23365 / NCTC 10854 / RM-666).